The primary structure comprises 31 residues: U8-ctenitoxin-Co1a (31 aa).

Disulfide bonds link Cys4–Cys18 and Cys11–Cys24.

In terms of tissue distribution, expressed by the venom gland.

The protein resides in the secreted. Blocks voltage-gated sodium channels (Nav). The sequence is that of U8-ctenitoxin-Co1a from Ctenus ornatus (Brazilian spider).